Reading from the N-terminus, the 147-residue chain is D-aminoacyl-tRNA deacylase (147 aa).

Residues G137–P138 carry the Gly-cisPro motif, important for rejection of L-amino acids motif.

The protein belongs to the DTD family. In terms of assembly, homodimer.

It localises to the cytoplasm. It catalyses the reaction glycyl-tRNA(Ala) + H2O = tRNA(Ala) + glycine + H(+). The catalysed reaction is a D-aminoacyl-tRNA + H2O = a tRNA + a D-alpha-amino acid + H(+). Its function is as follows. An aminoacyl-tRNA editing enzyme that deacylates mischarged D-aminoacyl-tRNAs. Also deacylates mischarged glycyl-tRNA(Ala), protecting cells against glycine mischarging by AlaRS. Acts via tRNA-based rather than protein-based catalysis; rejects L-amino acids rather than detecting D-amino acids in the active site. By recycling D-aminoacyl-tRNA to D-amino acids and free tRNA molecules, this enzyme counteracts the toxicity associated with the formation of D-aminoacyl-tRNA entities in vivo and helps enforce protein L-homochirality. This Levilactobacillus brevis (strain ATCC 367 / BCRC 12310 / CIP 105137 / JCM 1170 / LMG 11437 / NCIMB 947 / NCTC 947) (Lactobacillus brevis) protein is D-aminoacyl-tRNA deacylase.